Here is a 231-residue protein sequence, read N- to C-terminus: MEDSTSPKVTLYTYFRSSCSARLRIALNLKSIPYTPIAVNLLKGEQSSPENIALNPSGTVPTLIVEHDSKEPVTITQSLAALEYLEEITPASSHALLPPASNPEARAVVRTLVDIMSCDVQPVTNLRILKRVAPFGVDRAAWSKDLIEDGFRAYEAIAAKSAGLFSVGDSITMADVCLLPAVWGAERAGVKVEKFPTIYRVAQRLEEEDAVKRAHWRTQPDTPEEFRVSSS.

The GST N-terminal domain occupies 7-93; that stretch reads PKVTLYTYFR…YLEEITPASS (87 aa). Positions 102 to 224 constitute a GST C-terminal domain; sequence NPEARAVVRT…HWRTQPDTPE (123 aa).

It belongs to the GST superfamily. Zeta family.

It catalyses the reaction 4-maleylacetoacetate = 4-fumarylacetoacetate. The protein operates within amino-acid degradation; L-phenylalanine degradation; acetoacetate and fumarate from L-phenylalanine: step 5/6. Its function is as follows. Maleylacetoacetate isomerase; part of the L-tyrosine degradation gene cluster that mediates the biosynthesis of the brownish pigment pyomelanin as an alternative melanin. The 4-hydroxyphenylpyruvate dioxygenase hppD catalyzes the conversion of 4-hydroxyphenylpyruvate to homogentisic acid (HGA). The protein hmgX is crucial for this conversion and thus, probably functions as an accessory factor to mediate specific activity of hppD. The homogentisate 1,2-dioxygenase hmgA is then involved in the cleavage of the aromatic ring of HGA and its conversion to 4-maleylacetoacetate. When hmgA activity is lowered by the cell wall integrity (CWI) signaling pathway, HGA accumulates and leads to the production of pyomelanin through benzoquinone acetic acid after oxidation and polymerization. On the opposite, in non-stress conditions, both hppD and hmgA activities are balanced and HGA is degraded into 4-maleylacetoacetate. 4-maleylacetoacetate is further converted to 4-fumarylacetoacetate by the maleylacetoacetate isomerase maiA, which is degraded into fumarate and acetoacetate by the fumarylacetoacetase fahA. The polypeptide is Maleylacetoacetate isomerase maiA (Aspergillus fumigatus (strain ATCC MYA-4609 / CBS 101355 / FGSC A1100 / Af293) (Neosartorya fumigata)).